The chain runs to 182 residues: Large ribosomal subunit protein uL5 (182 aa).

This sequence belongs to the universal ribosomal protein uL5 family. In terms of assembly, part of the 50S ribosomal subunit; part of the 5S rRNA/L5/L18/L25 subcomplex. Contacts the 5S rRNA and the P site tRNA. Forms a bridge to the 30S subunit in the 70S ribosome.

This is one of the proteins that bind and probably mediate the attachment of the 5S RNA into the large ribosomal subunit, where it forms part of the central protuberance. In the 70S ribosome it contacts protein S13 of the 30S subunit (bridge B1b), connecting the 2 subunits; this bridge is implicated in subunit movement. Contacts the P site tRNA; the 5S rRNA and some of its associated proteins might help stabilize positioning of ribosome-bound tRNAs. The chain is Large ribosomal subunit protein uL5 from Leptospira interrogans serogroup Icterohaemorrhagiae serovar copenhageni (strain Fiocruz L1-130).